Reading from the N-terminus, the 1041-residue chain is Importin-9 (1041 aa).

A2 is modified (N-acetylalanine). The region spanning 43–119 is the Importin N-terminal domain; the sequence is AEEQIKVLEV…RELLPNGLRE (77 aa). The interval 936-967 is disordered; that stretch reads QATPAEWSQDDSNDMWEDQEEEEEEEEDGLAG. The segment covering 943 to 964 has biased composition (acidic residues); sequence SQDDSNDMWEDQEEEEEEEEDG.

It belongs to the importin beta family. In terms of assembly, interacts with histones H2A, H2B, H3 and H4. The binding is coupled to RanGTP cycles. Interacts with AKIRIN2; promoting association with pre-assembled proteasomes. Associates with pre-assembled proteasomes; interaction is indirect and mediated via interaction with AKIRIN2. Interacts with PPP2R1A and PPP2R1B.

The protein resides in the cytoplasm. It localises to the nucleus. Its function is as follows. Nuclear transport receptor that mediates nuclear import of proteins, such as histones, proteasome and actin. Serves as receptor for nuclear localization signals (NLS) in cargo substrates. Is thought to mediate docking of the importin/substrate complex to the nuclear pore complex (NPC) through binding to nucleoporin and the complex is subsequently translocated through the pore by an energy requiring, Ran-dependent mechanism. At the nucleoplasmic side of the NPC, Ran binds to the importin, the importin/substrate complex dissociates and importin is re-exported from the nucleus to the cytoplasm where GTP hydrolysis releases Ran. The directionality of nuclear import is thought to be conferred by an asymmetric distribution of the GTP- and GDP-bound forms of Ran between the cytoplasm and nucleus. Mediates the import of pre-assembled proteasomes into the nucleus; AKIRIN2 acts as a molecular bridge between IPO9 and the proteasome complex. Mediates the nuclear import of histones H2A, H2B, H4 and H4. In addition to nuclear import, also acts as a chaperone for histones by preventing inappropriate non-nucleosomal interactions. Mediates the nuclear import of actin. This chain is Importin-9, found in Homo sapiens (Human).